Reading from the N-terminus, the 92-residue chain is Alpha-conotoxin FrXXA (92 aa).

The first 24 residues, 1–24, serve as a signal peptide directing secretion; that stretch reads MPKLEMMLLVLLILPLSYFDSAGG. Positions 25-45 are excised as a propeptide; the sequence is QAVKVDGHGDGMDRYLQRDDR. 4 disulfide bridges follow: Cys63/Cys72, Cys68/Cys80, Cys73/Cys90, and Cys78/Cys92.

The protein belongs to the conotoxin D superfamily. As to quaternary structure, homodimer; disulfide-linked. In terms of processing, the homodimer contains 10 disulfide bonds. In terms of tissue distribution, expressed by the venom duct.

The protein resides in the secreted. Alpha-conotoxins act on postsynaptic membranes, they bind to the nicotinic acetylcholine receptors (nAChR) and thus inhibit them. Through its two C-terminal domains, this homodimeric protein would bind to two nAChR allosteric sites, located outside the nAChR C-loop of the principal binding face and at the adjacent binding interface in a clockwise direction. This toxin blocks both neuronal and muscular subtypes: human alpha-7/CHRNA7, human alpha-3-beta-2 (CHRNA3-CHRNB2), human alpha-4-beta-2 (CHRNA4-CHRNB2), mouse adult muscular subtype alpha-1-beta-1-delta-epsilon (CHRNA1-CHRNB1-CHRND-CHRNE), and mouse fetal muscular subtype alpha-1-beta-1-gamma-delta (CHRNA1-CHRNB1-CHRNG-CHRND). Shows different dissociation rates towards the different subtypes, with a very slow rate towards alpha-7 subtype (almost irreversible), followed by the adult muscular subtype, the fetal muscular subtype, alpha-3-beta-2 and alpha-4-beta-2 (almost entirely reversible within a few minutes of washing). This Conus fergusoni (Ferguson's cone) protein is Alpha-conotoxin FrXXA.